Consider the following 238-residue polypeptide: tRNA (guanine-N(7)-)-methyltransferase (238 aa).

E68, E93, D120, and D143 together coordinate S-adenosyl-L-methionine. D143 is a catalytic residue. Residues K147, D179, and 216 to 219 (TKFE) contribute to the substrate site.

Belongs to the class I-like SAM-binding methyltransferase superfamily. TrmB family.

It carries out the reaction guanosine(46) in tRNA + S-adenosyl-L-methionine = N(7)-methylguanosine(46) in tRNA + S-adenosyl-L-homocysteine. It functions in the pathway tRNA modification; N(7)-methylguanine-tRNA biosynthesis. Catalyzes the formation of N(7)-methylguanine at position 46 (m7G46) in tRNA. This is tRNA (guanine-N(7)-)-methyltransferase from Shewanella amazonensis (strain ATCC BAA-1098 / SB2B).